The primary structure comprises 429 residues: Lysophosphatidic acid phosphatase type 6 (429 aa).

The N-terminal 32 residues, 1–32 (MISRVFKLRMWAPVGVLTSLTYCLHQRRVALA), are a transit peptide targeting the mitochondrion. The tract at residues 58–169 (RHGARSPLKP…VFIRSTNIYR (112 aa)) is substrate binding. His-59 serves as the catalytic Nucleophile. Asp-336 functions as the Proton donor in the catalytic mechanism.

It belongs to the histidine acid phosphatase family. In terms of assembly, monomer. In terms of tissue distribution, detected in brain (at protein level).

It is found in the mitochondrion. The catalysed reaction is a phosphate monoester + H2O = an alcohol + phosphate. It catalyses the reaction 1-(9Z-octadecenoyl)-sn-glycero-3-phosphate + H2O = 1-(9Z-octadecenoyl)-sn-glycerol + phosphate. In terms of biological role, hydrolyzes lysophosphatidic acid (LPA) containing a medium length fatty acid chain to the corresponding monoacylglycerol. Has highest activity with lysophosphatidic acid containing myristate (C14:0), monounsaturated oleate (C18:1) or palmitate (C16:0), and lower activity with C18:0 and C6:0 lysophosphatidic acid. The sequence is that of Lysophosphatidic acid phosphatase type 6 (ACP6) from Bos taurus (Bovine).